The sequence spans 198 residues: Endonuclease V (198 aa).

Residues aspartate 38 and aspartate 101 each coordinate Mg(2+).

It belongs to the endonuclease V family. It depends on Mg(2+) as a cofactor.

It is found in the cytoplasm. It catalyses the reaction Endonucleolytic cleavage at apurinic or apyrimidinic sites to products with a 5'-phosphate.. In terms of biological role, DNA repair enzyme involved in the repair of deaminated bases. Selectively cleaves double-stranded DNA at the second phosphodiester bond 3' to a deoxyinosine leaving behind the intact lesion on the nicked DNA. The protein is Endonuclease V of Saccharolobus islandicus (strain M.16.27) (Sulfolobus islandicus).